A 1170-amino-acid polypeptide reads, in one-letter code: Thrombospondin-1 (1170 aa).

A signal peptide spans 1–18 (MELLRGLGVLFLLHMCGS). The tract at residues 47-95 (RLVKGQDLSSPAFRIENANLIPAVPDDKFQDLLDAVWADKGFIFLASLR) is heparin-binding. The Laminin G-like domain occupies 56 to 270 (SPAFRIENAN…HKTKDLQAIC (215 aa)). Cys-171 and Cys-232 are joined by a disulfide. N-linked (GlcNAc...) asparagine glycosylation is found at Asn-248 and Asn-360. Residues 316-373 (PLCFHNGVQYKNNEEWTVDSCTECHCQNSVTICKKVSCPIMPCSNATVPDGECCPRCW) form the VWFC domain. TSP type-1 domains follow at residues 379–429 (DDGW…QECD), 435–490 (DGGW…DACP), and 492–547 (NGGW…QDCP). A C-linked (Man) tryptophan glycan is attached at Trp-385. Intrachain disulfides connect Cys-391–Cys-423, Cys-395–Cys-428, and Cys-406–Cys-413. C-linked (Man) tryptophan glycosylation is found at Trp-438 and Trp-441. Intrachain disulfides connect Cys-447–Cys-484, Cys-451–Cys-489, and Cys-462–Cys-474. O-linked (Fuc...) threonine glycosylation occurs at Thr-450. A C-linked (Man) tryptophan glycan is attached at Trp-498. 21 disulfide bridges follow: Cys-504/Cys-541, Cys-508/Cys-546, Cys-519/Cys-531, Cys-551/Cys-562, Cys-556/Cys-572, Cys-575/Cys-586, Cys-592/Cys-608, Cys-599/Cys-617, Cys-620/Cys-644, Cys-650/Cys-663, Cys-657/Cys-676, Cys-678/Cys-689, Cys-705/Cys-713, Cys-718/Cys-738, Cys-754/Cys-774, Cys-777/Cys-797, Cys-813/Cys-833, Cys-836/Cys-856, Cys-874/Cys-894, Cys-910/Cys-930, and Cys-946/Cys-1167. Thr-507 carries an O-linked (Fuc...) threonine glycan. The tract at residues 531–1152 (CVGDVTENQV…YAGGRLGLFV (622 aa)) is involved in retention in extracellular matrix (ECM); involved in trimer formation. One can recognise an EGF-like 1 domain in the interval 547–587 (PIDGCLSNPCFAGAKCTSYPDGSWKCGACPPGYSGNGIQCK). An O-linked (Xyl) serine glycan is attached at Ser-553. The EGF-like 2 domain maps to 646-690 (PRNPCTDGTHDCNKNAKCNYLGHYSDPMYRCECKPGYAGNGIICG). TSP type-3 repeat units lie at residues 691 to 726 (EDTD…NSGQ), 727 to 762 (EDYD…NPAQ), 763 to 785 (YDYD…NPDQ), 786 to 821 (ADTD…NVDQ), 822 to 844 (RDTD…NPDQ), 845 to 882 (LDSD…NANQ), 883 to 918 (ADHD…NPDQ), and 919 to 954 (KDSD…DISE). Asn-708 carries an N-linked (GlcNAc...) asparagine glycan. The interval 840 to 934 (HNPDQLDSDS…GRGDACKDDF (95 aa)) is disordered. Basic and acidic residues-rich tracts occupy residues 883-894 (ADHDKDGKGDAC) and 917-934 (DQKD…KDDF). A Cell attachment site motif is present at residues 926–928 (RGD). In terms of domain architecture, TSP C-terminal spans 958–1170 (RRFQMIPLDP…SDMKYECRDS (213 aa)). The N-linked (GlcNAc...) asparagine glycan is linked to Asn-1067.

This sequence belongs to the thrombospondin family. As to quaternary structure, homotrimer; disulfide-linked. Can bind to fibrinogen, fibronectin, laminin, type V collagen and integrins alpha-V/beta-1, alpha-V/beta-3 and alpha-IIb/beta-3. Binds heparin. Interacts (via the C-terminal domain) with CD47. Interacts (via the TSP type I repeats) with CD36; the interaction conveys an antiangiogenic effect. Interacts (via the TSP type I repeats) with HRG; the interaction blocks the antiangiogenic effect of THBS1 with CD36. Interacts with ATF6 (via lumenal domain). Interacts with FN1; this interaction is enhanced by TNFAIP6, which may act as a bridging molecule between FN1 and THBS1. Interacts with SIRPA; the interaction stimulates phosphorylation of SIRPA.

It localises to the secreted. It is found in the cell surface. The protein localises to the extracellular space. The protein resides in the extracellular matrix. Its subcellular location is the endoplasmic reticulum. It localises to the sarcoplasmic reticulum. Adhesive glycoprotein that mediates cell-to-cell and cell-to-matrix interactions. Multifunctional, involved in inflammation, angiogenesis, wound healing, reactive oxygen species (ROS) signaling, nitrous oxide (NO) signaling, apoptosis, senescence, aging, cellular self-renewal, stemness, and cardiovascular and metabolic homeostasis. Negatively modulates dendritic cell activation and cytokine release, as part of an autocrine feedback loop, contributing to the resolution of inflammation and immune homeostasis. Ligand for receptor CD47. Modulates nitrous oxide (NO) signaling via CD47, hence playing a role as a pressor agent, supporting blood pressure. Plays a role in endothelial cell senescence, acting via CD47, by increasing the abundance and activation of NADPH oxidase NOX1, and so generating excess ROS. Inhibits stem cell self-renewal, acting via CD47 signaling, probably by regulation of the stem cell transcription factors POU5F1/OCT4, SOX2, MYC/c-Myc and KLF4. Negatively modulates wound healing, acting via CD47. Ligand for receptor CD36. Involved in inducing apoptosis in podocytes in response to elevated free fatty acids, acting via CD36. Plays a role in suppressing angiogenesis, acting, depending on context, via CD36 or CD47. Promotes cellular senescence in a TP53-CDKN1A-RB1 signaling-dependent manner. Ligand for immunoglobulin-like cell surface receptor SIRPA. Involved in ROS signaling in non-phagocytic cells, stimulating NADPH oxidase-derived ROS production, acting via interaction with SIRPA. Plays a role in metabolic dysfunction in diet-induced obesity, perhaps acting by exacerbating adipose inflammatory activity; its effects may be mediated, at least in part, through enhanced adipocyte proliferation. Plays a role in ER stress response, via its interaction with the activating transcription factor 6 alpha (ATF6) which produces adaptive ER stress response factors. May be involved in age-related conditions, including metabolic dysregulation, during normal aging. This Mus musculus (Mouse) protein is Thrombospondin-1 (Thbs1).